Reading from the N-terminus, the 606-residue chain is Probable methyltransferase PMT5 (606 aa).

The Cytoplasmic portion of the chain corresponds to 1–20; sequence MRGSWYKSVSSVFGLRPRIR. Residues 21 to 41 form a helical; Signal-anchor for type II membrane protein membrane-spanning segment; that stretch reads GLLFFIVGVVALVTILAPLTS. Residues 42–606 are Lumenal-facing; the sequence is NSYDSSSSST…LVCQKPFIKK (565 aa). Residues Asn-101 and Asn-409 are each glycosylated (N-linked (GlcNAc...) asparagine).

The protein belongs to the methyltransferase superfamily.

It is found in the endoplasmic reticulum membrane. This chain is Probable methyltransferase PMT5, found in Arabidopsis thaliana (Mouse-ear cress).